The sequence spans 436 residues: 3-ketoacyl-CoA thiolase (436 aa).

Cys99 serves as the catalytic Acyl-thioester intermediate. Residues His392 and Cys422 each act as proton acceptor in the active site.

This sequence belongs to the thiolase-like superfamily. Thiolase family. Heterotetramer of two alpha chains (FadJ) and two beta chains (FadI).

The protein localises to the cytoplasm. It carries out the reaction an acyl-CoA + acetyl-CoA = a 3-oxoacyl-CoA + CoA. The protein operates within lipid metabolism; fatty acid beta-oxidation. In terms of biological role, catalyzes the final step of fatty acid oxidation in which acetyl-CoA is released and the CoA ester of a fatty acid two carbons shorter is formed. The chain is 3-ketoacyl-CoA thiolase from Citrobacter koseri (strain ATCC BAA-895 / CDC 4225-83 / SGSC4696).